A 181-amino-acid chain; its full sequence is ATP synthase subunit delta (181 aa).

The protein belongs to the ATPase delta chain family. In terms of assembly, F-type ATPases have 2 components, F(1) - the catalytic core - and F(0) - the membrane proton channel. F(1) has five subunits: alpha(3), beta(3), gamma(1), delta(1), epsilon(1). F(0) has three main subunits: a(1), b(2) and c(10-14). The alpha and beta chains form an alternating ring which encloses part of the gamma chain. F(1) is attached to F(0) by a central stalk formed by the gamma and epsilon chains, while a peripheral stalk is formed by the delta and b chains.

The protein resides in the cell inner membrane. F(1)F(0) ATP synthase produces ATP from ADP in the presence of a proton or sodium gradient. F-type ATPases consist of two structural domains, F(1) containing the extramembraneous catalytic core and F(0) containing the membrane proton channel, linked together by a central stalk and a peripheral stalk. During catalysis, ATP synthesis in the catalytic domain of F(1) is coupled via a rotary mechanism of the central stalk subunits to proton translocation. In terms of biological role, this protein is part of the stalk that links CF(0) to CF(1). It either transmits conformational changes from CF(0) to CF(1) or is implicated in proton conduction. In Chlorobium phaeobacteroides (strain DSM 266 / SMG 266 / 2430), this protein is ATP synthase subunit delta.